The sequence spans 259 residues: Imidazole glycerol phosphate synthase subunit HisF (259 aa).

Residues Asp11 and Asp130 contribute to the active site.

It belongs to the HisA/HisF family. Heterodimer of HisH and HisF.

It is found in the cytoplasm. The catalysed reaction is 5-[(5-phospho-1-deoxy-D-ribulos-1-ylimino)methylamino]-1-(5-phospho-beta-D-ribosyl)imidazole-4-carboxamide + L-glutamine = D-erythro-1-(imidazol-4-yl)glycerol 3-phosphate + 5-amino-1-(5-phospho-beta-D-ribosyl)imidazole-4-carboxamide + L-glutamate + H(+). It functions in the pathway amino-acid biosynthesis; L-histidine biosynthesis; L-histidine from 5-phospho-alpha-D-ribose 1-diphosphate: step 5/9. Its function is as follows. IGPS catalyzes the conversion of PRFAR and glutamine to IGP, AICAR and glutamate. The HisF subunit catalyzes the cyclization activity that produces IGP and AICAR from PRFAR using the ammonia provided by the HisH subunit. The polypeptide is Imidazole glycerol phosphate synthase subunit HisF (Oleidesulfovibrio alaskensis (strain ATCC BAA-1058 / DSM 17464 / G20) (Desulfovibrio alaskensis)).